A 73-amino-acid polypeptide reads, in one-letter code: Translation initiation factor IF-1 (73 aa).

An S1-like domain is found at 1-73 (MPKKDGAIEI…SRGRIVYRYK (73 aa)).

Belongs to the IF-1 family. As to quaternary structure, component of the 30S ribosomal translation pre-initiation complex which assembles on the 30S ribosome in the order IF-2 and IF-3, IF-1 and N-formylmethionyl-tRNA(fMet); mRNA recruitment can occur at any time during PIC assembly.

Its subcellular location is the cytoplasm. In terms of biological role, one of the essential components for the initiation of protein synthesis. Stabilizes the binding of IF-2 and IF-3 on the 30S subunit to which N-formylmethionyl-tRNA(fMet) subsequently binds. Helps modulate mRNA selection, yielding the 30S pre-initiation complex (PIC). Upon addition of the 50S ribosomal subunit IF-1, IF-2 and IF-3 are released leaving the mature 70S translation initiation complex. This chain is Translation initiation factor IF-1, found in Frankia alni (strain DSM 45986 / CECT 9034 / ACN14a).